We begin with the raw amino-acid sequence, 438 residues long: Adenylosuccinate synthetase (438 aa).

GTP contacts are provided by residues 13 to 19 (GDEGKGK) and 41 to 43 (GHT). Aspartate 14 serves as the catalytic Proton acceptor. Mg(2+) is bound by residues aspartate 14 and glycine 41. IMP contacts are provided by residues 14-17 (DEGK), 39-42 (NAGH), threonine 130, arginine 144, glutamine 225, threonine 240, and arginine 310. Histidine 42 acts as the Proton donor in catalysis. A substrate-binding site is contributed by 306–312 (ATTGRLR). Residues arginine 312, 338 to 340 (KLD), and 421 to 423 (STG) contribute to the GTP site.

The protein belongs to the adenylosuccinate synthetase family. In terms of assembly, homodimer. Requires Mg(2+) as cofactor.

It localises to the cytoplasm. It catalyses the reaction IMP + L-aspartate + GTP = N(6)-(1,2-dicarboxyethyl)-AMP + GDP + phosphate + 2 H(+). It functions in the pathway purine metabolism; AMP biosynthesis via de novo pathway; AMP from IMP: step 1/2. Plays an important role in the de novo pathway of purine nucleotide biosynthesis. Catalyzes the first committed step in the biosynthesis of AMP from IMP. The protein is Adenylosuccinate synthetase of Aliivibrio fischeri (strain ATCC 700601 / ES114) (Vibrio fischeri).